We begin with the raw amino-acid sequence, 219 residues long: Protein OPG170 (219 aa).

The N-terminal stretch at 1–16 (MYSLLFIILMCIPFSF) is a signal peptide. Residue Asn-70 is glycosylated (N-linked (GlcNAc...) asparagine; by host).

This sequence belongs to the orthopoxvirus OPG170 family.

The protein localises to the secreted. Functionally, may interact with several cellular chemokines to interfere with chemokine-glycosaminoglycan (GAG) interactions at the cell surface to alter chemotaxis of nearby responsive cells. This is Protein OPG170 (OPG170) from Vaccinia virus (strain Copenhagen) (VACV).